Reading from the N-terminus, the 179-residue chain is Large ribosomal subunit protein uL5 (179 aa).

It belongs to the universal ribosomal protein uL5 family. Part of the 50S ribosomal subunit; part of the 5S rRNA/L5/L18/L25 subcomplex. Contacts the 5S rRNA and the P site tRNA. Forms a bridge to the 30S subunit in the 70S ribosome.

Its function is as follows. This is one of the proteins that bind and probably mediate the attachment of the 5S RNA into the large ribosomal subunit, where it forms part of the central protuberance. In the 70S ribosome it contacts protein S13 of the 30S subunit (bridge B1b), connecting the 2 subunits; this bridge is implicated in subunit movement. Contacts the P site tRNA; the 5S rRNA and some of its associated proteins might help stabilize positioning of ribosome-bound tRNAs. The sequence is that of Large ribosomal subunit protein uL5 from Staphylococcus haemolyticus (strain JCSC1435).